Here is a 291-residue protein sequence, read N- to C-terminus: Homoserine kinase (291 aa).

Position 79–89 (79–89 (PLARGLGSSSA)) interacts with ATP.

This sequence belongs to the GHMP kinase family. Homoserine kinase subfamily.

Its subcellular location is the cytoplasm. The enzyme catalyses L-homoserine + ATP = O-phospho-L-homoserine + ADP + H(+). It participates in amino-acid biosynthesis; L-threonine biosynthesis; L-threonine from L-aspartate: step 4/5. In terms of biological role, catalyzes the ATP-dependent phosphorylation of L-homoserine to L-homoserine phosphate. This is Homoserine kinase from Leuconostoc citreum (strain KM20).